The chain runs to 116 residues: Iron-sulfur cluster insertion protein ErpA (116 aa).

Residues Cys44, Cys108, and Cys110 each coordinate iron-sulfur cluster.

The protein belongs to the HesB/IscA family. Homodimer. Requires iron-sulfur cluster as cofactor.

Functionally, required for insertion of 4Fe-4S clusters for at least IspG. In Idiomarina loihiensis (strain ATCC BAA-735 / DSM 15497 / L2-TR), this protein is Iron-sulfur cluster insertion protein ErpA.